The sequence spans 179 residues: Large ribosomal subunit protein uL6 (179 aa).

It belongs to the universal ribosomal protein uL6 family. Part of the 50S ribosomal subunit.

This protein binds to the 23S rRNA, and is important in its secondary structure. It is located near the subunit interface in the base of the L7/L12 stalk, and near the tRNA binding site of the peptidyltransferase center. This chain is Large ribosomal subunit protein uL6, found in Syntrophobacter fumaroxidans (strain DSM 10017 / MPOB).